The primary structure comprises 199 residues: NAD(P)H dehydrogenase (quinone) (199 aa).

Residues 4–190 form the Flavodoxin-like domain; it reads VLVLYYSAYG…AGARYQGRVI (187 aa). FMN is bound by residues 10–15 and 78–80; these read SAYGHI and TRF. Y12 is an NAD(+) binding site. W98 is a binding site for substrate. FMN-binding positions include 113-119 and H134; that span reads STATQHG.

This sequence belongs to the WrbA family. It depends on FMN as a cofactor.

The catalysed reaction is a quinone + NADH + H(+) = a quinol + NAD(+). The enzyme catalyses a quinone + NADPH + H(+) = a quinol + NADP(+). In Bradyrhizobium sp. (strain ORS 278), this protein is NAD(P)H dehydrogenase (quinone).